Consider the following 464-residue polypeptide: UDP-N-acetylmuramate--L-alanine ligase (464 aa).

112-118 is a binding site for ATP; the sequence is GTHGKTT.

It belongs to the MurCDEF family.

The protein resides in the cytoplasm. It catalyses the reaction UDP-N-acetyl-alpha-D-muramate + L-alanine + ATP = UDP-N-acetyl-alpha-D-muramoyl-L-alanine + ADP + phosphate + H(+). It participates in cell wall biogenesis; peptidoglycan biosynthesis. Cell wall formation. The polypeptide is UDP-N-acetylmuramate--L-alanine ligase (Chromobacterium violaceum (strain ATCC 12472 / DSM 30191 / JCM 1249 / CCUG 213 / NBRC 12614 / NCIMB 9131 / NCTC 9757 / MK)).